We begin with the raw amino-acid sequence, 711 residues long: Polyribonucleotide nucleotidyltransferase (711 aa).

2 residues coordinate Mg(2+): aspartate 489 and aspartate 495. The KH domain occupies 556 to 615; the sequence is PRIHTIKISPDKIKDVIGKGGSVIRALTEETGTTIEIEDDGTVKIAATDGEKAKHAIRRI. In terms of domain architecture, S1 motif spans 625 to 693; it reads GRIYNGKVTR…RQGRVRLSIK (69 aa).

This sequence belongs to the polyribonucleotide nucleotidyltransferase family. In terms of assembly, component of the RNA degradosome, which is a multiprotein complex involved in RNA processing and mRNA degradation. The cofactor is Mg(2+).

It localises to the cytoplasm. It catalyses the reaction RNA(n+1) + phosphate = RNA(n) + a ribonucleoside 5'-diphosphate. Its function is as follows. Involved in mRNA degradation. Catalyzes the phosphorolysis of single-stranded polyribonucleotides processively in the 3'- to 5'-direction. This chain is Polyribonucleotide nucleotidyltransferase, found in Cronobacter sakazakii (strain ATCC BAA-894) (Enterobacter sakazakii).